An 800-amino-acid polypeptide reads, in one-letter code: Phenylalanine--tRNA ligase beta subunit (800 aa).

The tRNA-binding domain maps to 39-154; that stretch reads TKDIKNLVVG…ESQVPGTDAL (116 aa). The B5 domain maps to 408–483; sequence AFITPIDITA…RIYGYDDIPS (76 aa). Asp-461, Asp-467, Glu-470, and Glu-471 together coordinate Mg(2+). Residues 708–800 enclose the FDX-ACB domain; sequence PRFPGMSRDI…ALIEQGAVIR (93 aa).

The protein belongs to the phenylalanyl-tRNA synthetase beta subunit family. Type 1 subfamily. Tetramer of two alpha and two beta subunits. Mg(2+) is required as a cofactor.

The protein localises to the cytoplasm. It catalyses the reaction tRNA(Phe) + L-phenylalanine + ATP = L-phenylalanyl-tRNA(Phe) + AMP + diphosphate + H(+). This is Phenylalanine--tRNA ligase beta subunit from Staphylococcus aureus (strain MRSA252).